Reading from the N-terminus, the 470-residue chain is Growth/differentiation factor 6 (470 aa).

The first 22 residues, 1–22 (MDTSRVLLSAVFLISFLWDLPG), serve as a signal peptide directing secretion. A propeptide spanning residues 23–350 (FQQASISSSS…SPSPGRRRRR (328 aa)) is cleaved from the precursor. Residues 28-98 (ISSSSSSAEL…REPPGRGPRV (71 aa)) form a disordered region. A compositionally biased stretch (basic and acidic residues) spans 45 to 80 (SRKEGRMPRAPRENATAREPLDRQEPPPRPQEEPQR). The N-linked (GlcNAc...) asparagine glycan is linked to N120. Disordered regions lie at residues 247–272 (PGAA…SLGF) and 308–366 (TEVV…KKSR). Over residues 321 to 333 (GPPPPPPPPPPSG) the composition is skewed to pro residues. Residues 345–366 (GRRRRRTAFASRHGKRHGKKSR) show a composition bias toward basic residues. 3 cysteine pairs are disulfide-bonded: C369–C435, C398–C467, and C402–C469.

This sequence belongs to the TGF-beta family. As to quaternary structure, homodimer; disulfide-linked.

It is found in the secreted. In terms of biological role, growth factor that controls proliferation and cellular differentiation in the retina and bone formation. Plays a key role in regulating apoptosis during retinal development. Establishes dorsal-ventral positional information in the retina and controls the formation of the retinotectal map. Required for normal formation of bones and joints in the limbs, skull, digits and axial skeleton. Plays a key role in establishing boundaries between skeletal elements during development. Regulation of GDF6 expression seems to be a mechanism for evolving species-specific changes in skeletal structures. Seems to positively regulate differentiation of chondrogenic tissue through the growth factor receptors subunits BMPR1A, BMPR1B, BMPR2 and ACVR2A, leading to the activation of SMAD1-SMAD5-SMAD8 complex. The regulation of chondrogenic differentiation is inhibited by NOG. Also involved in the induction of adipogenesis from mesenchymal stem cells. This mechanism acts through the growth factor receptors subunits BMPR1A, BMPR2 and ACVR2A and the activation of SMAD1-SMAD5-SMAD8 complex and MAPK14/p38. The polypeptide is Growth/differentiation factor 6 (GDF6) (Bos taurus (Bovine)).